Here is a 541-residue protein sequence, read N- to C-terminus: MHTLIKGVLEEILEAEVIIEYPKDREHGHYATPIAFNLAKVFKKSPLAIAEELALKIGSHEKTQGFFDRVVACKGYINFTLSLDFLERFTQKALELKEQFGSQVKSERSQKIFLEFVSANPTGPLHIGHARGAVFGDSLAKIARFLGHEVLCEYYVNDMGSQIRLLGVSVWLAYKEHVLKESVTYPEVFYKGEYIIEIAKKAHNDLEPSLFKENEETIIEVLSDYAKDLMLLEIKGNLDALDIHFDSYASEKEVFKHKDAVFDRLEKANALYEKDSKTWLKSSLYQDESDRVLIKEDKSYTYLAGDIVYHDEKFQQNYTKYINIWGADHHGYIARVKASLEFLGYDSSKLEVLLAQMVRLLKDNEPYKMSKRAGNFILIKDVIDDVGKDALRFIFLSKRLDTHLEFDVNTLKKQDSSNPIYYIHYANSRIHTMLEKSPFSKEEILQTPLKNLNAEEKYLLFSALSLPKAVESSFEEYGLQKMCEYAKTLASEFHRFYNAGKILDTPKAKELLKICLMVSLSLTNAFKLLGIEIKTKISSKD.

The 'HIGH' region signature appears at 119-129 (ANPTGPLHIGH).

It belongs to the class-I aminoacyl-tRNA synthetase family. In terms of assembly, monomer.

It localises to the cytoplasm. The enzyme catalyses tRNA(Arg) + L-arginine + ATP = L-arginyl-tRNA(Arg) + AMP + diphosphate. The polypeptide is Arginine--tRNA ligase (argS) (Helicobacter pylori (strain J99 / ATCC 700824) (Campylobacter pylori J99)).